The primary structure comprises 238 residues: MSDVTTAEFNEEGKYLRKVRSFVLREGRLTKGQATAMEEQWPLMGLDYSPEPLDLAEIFGREADTVLEIGFGMGASLVEMAKASPELNFIGIEVHKPGVGACLSVAAEAGVTNLRVFHHDAIEVLENSIVPSSLARVQLFFPDPWHKKRHHKRRIVQPEFAQTIRNSLKLGGVFHLATDWENYSEHMLEVMNAAPGYKNQSTTGDVVERPDHRPLTKFEARGHRLGHGVWDIMFERID.

Glu-68, Glu-93, Asp-120, and Asp-143 together coordinate S-adenosyl-L-methionine. Residue Asp-143 is part of the active site. Substrate-binding positions include Lys-147, Asp-179, and 216 to 219 (TKFE).

It belongs to the class I-like SAM-binding methyltransferase superfamily. TrmB family.

It carries out the reaction guanosine(46) in tRNA + S-adenosyl-L-methionine = N(7)-methylguanosine(46) in tRNA + S-adenosyl-L-homocysteine. Its pathway is tRNA modification; N(7)-methylguanine-tRNA biosynthesis. Catalyzes the formation of N(7)-methylguanine at position 46 (m7G46) in tRNA. The polypeptide is tRNA (guanine-N(7)-)-methyltransferase (Shewanella woodyi (strain ATCC 51908 / MS32)).